Reading from the N-terminus, the 210-residue chain is 3-hexulose-6-phosphate synthase (210 aa).

It belongs to the HPS/KGPDC family. HPS subfamily.

It catalyses the reaction D-ribulose 5-phosphate + formaldehyde = D-arabino-hex-3-ulose 6-phosphate. Its pathway is one-carbon metabolism; formaldehyde assimilation via RuMP pathway; D-fructose 6-phosphate from D-ribulose 5-phosphate and formaldehyde: step 1/2. Functionally, catalyzes the condensation of ribulose 5-phosphate with formaldehyde to form 3-hexulose 6-phosphate. In Staphylococcus epidermidis (strain ATCC 12228 / FDA PCI 1200), this protein is 3-hexulose-6-phosphate synthase.